The sequence spans 520 residues: Ubiquitin carboxyl-terminal hydrolase 3 (520 aa).

Residue Met1 is modified to N-acetylmethionine. A UBP-type zinc finger spans residues 1–121; the sequence is MECPHLSSSV…QKVREHLQNL (121 aa). Positions 3, 5, 29, 32, 41, 44, 49, 56, 60, 82, 95, and 98 each coordinate Zn(2+). The USP domain occupies 159-511; sequence TGLRNLGNTC…KAYILFYVEH (353 aa). Cys168 acts as the Nucleophile in catalysis. His471 acts as the Proton acceptor in catalysis.

Belongs to the peptidase C19 family. USP3 subfamily. As to quaternary structure, interacts (via UBP-type domain) with H2A; the interaction is less efficient than with monoubiquitinated H2A. Expressed in all tissues examined, with strongest expression in pancreas.

Its subcellular location is the nucleus. The protein localises to the cytoplasm. The catalysed reaction is Thiol-dependent hydrolysis of ester, thioester, amide, peptide and isopeptide bonds formed by the C-terminal Gly of ubiquitin (a 76-residue protein attached to proteins as an intracellular targeting signal).. Its function is as follows. Deubiquitinase that plays a role in several cellular processes including transcriptional regulation, cell cycle progression or innate immunity. In response to DNA damage, deubiquitinates monoubiquitinated target proteins such as histone H2A and H2AX and thereby counteracts RNF168- and RNF8-mediated ubiquitination. In turn, participates in the recruitment of DNA damage repair factors to DNA break sites. Required for proper progression through S phase and subsequent mitotic entry. Acts as a positive regulator of TP53 by deubiquitinating and stabilizing it to promote normal cell proliferation and transformation. Participates in establishing tolerance innate immune memory through non-transcriptional feedback. Mechanistically, negatively regulates TLR-induced NF-kappa-B signaling by targeting and removing the 'Lys-63'-linked polyubiquitin chains on MYD88. Negatively regulates the activation of type I interferon signaling by mediating 'Lys-63'-linked polyubiquitin chains on RIGI and IFIH1. Also deubiquinates ASC/PYCARD, the central adapter mediating the assembly and activation of most inflammasomes, and thereby promotes inflammasome activation. This is Ubiquitin carboxyl-terminal hydrolase 3 (USP3) from Homo sapiens (Human).